The sequence spans 655 residues: Peroxidase skpo-1 (655 aa).

Positions 1–19 are cleaved as a signal peptide; it reads MKSLLFSILLIYLIQLVRS. Residues 22-56 enclose the ShKT domain; the sequence is CTDKHIHCFFWSQEGECEVNPRWMKKHCQKACGTC. Intrachain disulfides connect Cys-22–Cys-56, Cys-29–Cys-49, Cys-38–Cys-53, and Cys-133–Cys-150. The active-site Proton acceptor is His-222. Residue His-428 participates in heme b binding. Intrachain disulfides connect Cys-520-Cys-576 and Cys-617-Cys-642.

The protein belongs to the peroxidase family. XPO subfamily. Requires heme b as cofactor. As to expression, exclusively expressed in hypodermis.

The enzyme catalyses 2 a phenolic donor + H2O2 = 2 a phenolic radical donor + 2 H2O. Its function is as follows. Involved in hypodermal immune response against some types of bacterial infection. Probably utilizes H(2)O(2) produced by the NADPH oxidase bli-3. May play a role in cuticule biosynthesis. This is Peroxidase skpo-1 from Caenorhabditis elegans.